The chain runs to 385 residues: Chaperone protein DnaJ (385 aa).

The J domain occupies Asp5–Gly70. Residues Gly137–Thr214 form a CR-type zinc finger. Zn(2+)-binding residues include Cys150, Cys153, Cys167, Cys170, Cys189, Cys192, Cys202, and Cys205. CXXCXGXG motif repeat units lie at residues Cys150–Gly157, Cys167–Gly174, Cys189–Gly196, and Cys202–Gly209.

This sequence belongs to the DnaJ family. In terms of assembly, homodimer. The cofactor is Zn(2+).

It localises to the cytoplasm. Participates actively in the response to hyperosmotic and heat shock by preventing the aggregation of stress-denatured proteins and by disaggregating proteins, also in an autonomous, DnaK-independent fashion. Unfolded proteins bind initially to DnaJ; upon interaction with the DnaJ-bound protein, DnaK hydrolyzes its bound ATP, resulting in the formation of a stable complex. GrpE releases ADP from DnaK; ATP binding to DnaK triggers the release of the substrate protein, thus completing the reaction cycle. Several rounds of ATP-dependent interactions between DnaJ, DnaK and GrpE are required for fully efficient folding. Also involved, together with DnaK and GrpE, in the DNA replication of plasmids through activation of initiation proteins. The chain is Chaperone protein DnaJ from Vibrio harveyi (Beneckea harveyi).